The following is a 271-amino-acid chain: Sec-independent protein translocase protein TatC (271 aa).

Transmembrane regions (helical) follow at residues Ile-35–Gln-55, Ala-93–Ile-113, Tyr-124–Tyr-144, Ile-178–Met-198, Ser-213–Met-233, and Cys-234–Val-254.

Belongs to the TatC family. Forms a complex with TatA.

It is found in the cell inner membrane. Part of the twin-arginine translocation (Tat) system that transports large folded proteins containing a characteristic twin-arginine motif in their signal peptide across membranes. This Koribacter versatilis (strain Ellin345) protein is Sec-independent protein translocase protein TatC.